Reading from the N-terminus, the 171-residue chain is Cytochrome c-type biogenesis protein CcmE (171 aa).

The Cytoplasmic segment spans residues 1-7 (MNRKQKR). A helical; Signal-anchor for type II membrane protein transmembrane segment spans residues 8–28 (LAVIAGGMGFIAAAVLLVMFA). Over 29–171 (FSQSVAYFYM…NPGEEAKATQ (143 aa)) the chain is Periplasmic. His124 and Tyr128 together coordinate heme. Positions 132-171 (DVADRLKQQGLWKEGQGGQESPGKEGQGQENPGEEAKATQ) are disordered.

Belongs to the CcmE/CycJ family.

It is found in the cell inner membrane. In terms of biological role, heme chaperone required for the biogenesis of c-type cytochromes. Transiently binds heme delivered by CcmC and transfers the heme to apo-cytochromes in a process facilitated by CcmF and CcmH. This Rhizobium leguminosarum bv. trifolii (strain WSM2304) protein is Cytochrome c-type biogenesis protein CcmE.